The following is a 313-amino-acid chain: Foldase protein PrsA (313 aa).

A signal peptide spans 1 to 20; that stretch reads MKKKLLAGAITLLSVATLAA. A lipid anchor (N-palmitoyl cysteine) is attached at cysteine 21. Cysteine 21 is lipidated: S-diacylglycerol cysteine. The 99-residue stretch at 143 to 241 folds into the PpiC domain; that stretch reads TPDVTAQIIR…SQYYIVKLTK (99 aa).

The protein belongs to the PrsA family.

Its subcellular location is the cell membrane. The enzyme catalyses [protein]-peptidylproline (omega=180) = [protein]-peptidylproline (omega=0). In terms of biological role, plays a major role in protein secretion by helping the post-translocational extracellular folding of several secreted proteins. The polypeptide is Foldase protein PrsA (Streptococcus pneumoniae (strain P1031)).